The following is a 523-amino-acid chain: UDP-glucuronosyltransferase 3A2 (523 aa).

The N-terminal stretch at 1-22 (MAGQRVLLLVGFLLPGVLLSEA) is a signal peptide. Topologically, residues 23 to 483 (AKILTISTVG…YVFQQPWHEQ (461 aa)) are extracellular. Asn-52 carries N-linked (GlcNAc...) asparagine glycosylation. Residues 484 to 504 (YLLDVFVFLLGLTLGTLWLCG) traverse the membrane as a helical segment. Residues 505–523 (KLLGMAVWWLRGARKVKET) are Cytoplasmic-facing.

Belongs to the UDP-glycosyltransferase family.

Its subcellular location is the membrane. It catalyses the reaction glucuronate acceptor + UDP-alpha-D-glucuronate = acceptor beta-D-glucuronoside + UDP + H(+). Functionally, UDP-glucuronosyltransferases catalyze phase II biotransformation reactions in which lipophilic substrates are conjugated with glucuronic acid to increase water solubility and enhance excretion. They are of major importance in the conjugation and subsequent elimination of potentially toxic xenobiotics and endogenous compounds. This is UDP-glucuronosyltransferase 3A2 (UGT3A2) from Homo sapiens (Human).